The following is a 72-amino-acid chain: Large ribosomal subunit protein bL31 (72 aa).

Zn(2+) is bound by residues Cys16, Cys18, Cys38, and Cys41.

It belongs to the bacterial ribosomal protein bL31 family. Type A subfamily. As to quaternary structure, part of the 50S ribosomal subunit. It depends on Zn(2+) as a cofactor.

Its function is as follows. Binds the 23S rRNA. The sequence is that of Large ribosomal subunit protein bL31 from Vibrio cholerae serotype O1 (strain ATCC 39541 / Classical Ogawa 395 / O395).